The chain runs to 518 residues: uncharacterized protein (518 aa).

Belongs to the MG032/MG096/MG288 family.

This is an uncharacterized protein from Mycoplasma pneumoniae (strain ATCC 29342 / M129 / Subtype 1) (Mycoplasmoides pneumoniae).